A 289-amino-acid polypeptide reads, in one-letter code: 4-diphosphocytidyl-2-C-methyl-D-erythritol kinase (289 aa).

Lys-11 is an active-site residue. Residue 96–106 (PVAAGIGGGSS) coordinates ATP. Asp-138 is an active-site residue.

The protein belongs to the GHMP kinase family. IspE subfamily.

The catalysed reaction is 4-CDP-2-C-methyl-D-erythritol + ATP = 4-CDP-2-C-methyl-D-erythritol 2-phosphate + ADP + H(+). Its pathway is isoprenoid biosynthesis; isopentenyl diphosphate biosynthesis via DXP pathway; isopentenyl diphosphate from 1-deoxy-D-xylulose 5-phosphate: step 3/6. Functionally, catalyzes the phosphorylation of the position 2 hydroxy group of 4-diphosphocytidyl-2C-methyl-D-erythritol. The sequence is that of 4-diphosphocytidyl-2-C-methyl-D-erythritol kinase from Azorhizobium caulinodans (strain ATCC 43989 / DSM 5975 / JCM 20966 / LMG 6465 / NBRC 14845 / NCIMB 13405 / ORS 571).